Here is a 232-residue protein sequence, read N- to C-terminus: Large ribosomal subunit protein uL1 (232 aa).

This sequence belongs to the universal ribosomal protein uL1 family. Part of the 50S ribosomal subunit.

Its function is as follows. Binds directly to 23S rRNA. The L1 stalk is quite mobile in the ribosome, and is involved in E site tRNA release. In terms of biological role, protein L1 is also a translational repressor protein, it controls the translation of the L11 operon by binding to its mRNA. In Amoebophilus asiaticus (strain 5a2), this protein is Large ribosomal subunit protein uL1.